Here is a 339-residue protein sequence, read N- to C-terminus: MKNTADITVLGAGSYGTALAISLASNGHRTMLWGHEPEHIENLKNDKSNEAFLPGIPLPDLLIPEADLATALAASNNVLVVVPSHVFGLVLSQAKPLLRKDSRIVWATKGLEPETGRLIQDVAREVLGDEYPLAVLSGPTFAKELAAGMPTAISIAGTDPQFTKDLVELLHSPKRLRVYANDDFIGLQLGGAVKNVIAIGAGLSDGIGFGANARTALITRGLVELTRLGEAMGAQASTFMGMAGLGDLVLTCTDNQSRNRRFGLALGKGSDVEAAQEEIGQVVEGYRNTKEVYTLAKRLGVEMPITEQVYQVLYKGKSPVDAAKELLSREQKSETSSAE.

Residues Ser-14, Tyr-15, His-35, and Lys-109 each coordinate NADPH. 3 residues coordinate sn-glycerol 3-phosphate: Lys-109, Gly-138, and Thr-140. Ala-142 contributes to the NADPH binding site. Residues Lys-194, Asp-247, Ser-257, Arg-258, and Asn-259 each contribute to the sn-glycerol 3-phosphate site. Lys-194 serves as the catalytic Proton acceptor. NADPH is bound at residue Arg-258. Residues Val-282 and Glu-284 each coordinate NADPH.

It belongs to the NAD-dependent glycerol-3-phosphate dehydrogenase family.

The protein resides in the cytoplasm. It catalyses the reaction sn-glycerol 3-phosphate + NAD(+) = dihydroxyacetone phosphate + NADH + H(+). The catalysed reaction is sn-glycerol 3-phosphate + NADP(+) = dihydroxyacetone phosphate + NADPH + H(+). It participates in membrane lipid metabolism; glycerophospholipid metabolism. In terms of biological role, catalyzes the reduction of the glycolytic intermediate dihydroxyacetone phosphate (DHAP) to sn-glycerol 3-phosphate (G3P), the key precursor for phospholipid synthesis. The chain is Glycerol-3-phosphate dehydrogenase [NAD(P)+] from Shewanella halifaxensis (strain HAW-EB4).